Reading from the N-terminus, the 284-residue chain is MPFSRLFGKKDKNQMDDIVEEGVQRVLELPMDKIFPNQFQPRTVFDQDKIDELARTIRIHGVIQPIVVREMEPDYYEIIAGERRFRAVLSLKLEKIPAIIQNLDDEEVAAIALIENLQREELTPIEEAKAYRSLLDMQDVTQEALAQRVGKSQSAIANKMRLLKLPETVQEAVLNKQISERHARSLLALETEEQQVSLLQEIEENHWNVKQTEARIQEILGVKKSVATKKTKPKRQAISRDVRIAMNTIKQSVTMVKDNGMDLDFTEEETDDFYQITIQIPKKK.

The segment at residues 143 to 162 (EALAQRVGKSQSAIANKMRL) is a DNA-binding region (H-T-H motif).

The protein belongs to the ParB family.

It is found in the cytoplasm. It localises to the nucleoid. Its function is as follows. Effects nucleoid occlusion by binding relatively nonspecifically to DNA and preventing the assembly of the division machinery in the vicinity of the nucleoid, especially under conditions that disturb the cell cycle. It helps to coordinate cell division and chromosome segregation by preventing the formation of the Z ring through the nucleoid, which would cause chromosome breakage. The sequence is that of Nucleoid occlusion protein from Listeria innocua serovar 6a (strain ATCC BAA-680 / CLIP 11262).